Consider the following 400-residue polypeptide: Argininosuccinate synthase (400 aa).

ATP is bound at residue 9-17; sequence AYSGGLDTS. Y87 contacts L-citrulline. G117 is an ATP binding site. L-aspartate-binding residues include T119, N123, and D124. N123 contributes to the L-citrulline binding site. L-citrulline is bound by residues R127, S176, S185, E261, and Y273.

It belongs to the argininosuccinate synthase family. Type 1 subfamily. In terms of assembly, homotetramer.

Its subcellular location is the cytoplasm. The catalysed reaction is L-citrulline + L-aspartate + ATP = 2-(N(omega)-L-arginino)succinate + AMP + diphosphate + H(+). The protein operates within amino-acid biosynthesis; L-arginine biosynthesis; L-arginine from L-ornithine and carbamoyl phosphate: step 2/3. The chain is Argininosuccinate synthase from Chlorobium luteolum (strain DSM 273 / BCRC 81028 / 2530) (Pelodictyon luteolum).